We begin with the raw amino-acid sequence, 200 residues long: Imidazoleglycerol-phosphate dehydratase (200 aa).

This sequence belongs to the imidazoleglycerol-phosphate dehydratase family.

The protein resides in the cytoplasm. The catalysed reaction is D-erythro-1-(imidazol-4-yl)glycerol 3-phosphate = 3-(imidazol-4-yl)-2-oxopropyl phosphate + H2O. Its pathway is amino-acid biosynthesis; L-histidine biosynthesis; L-histidine from 5-phospho-alpha-D-ribose 1-diphosphate: step 6/9. This Leifsonia xyli subsp. xyli (strain CTCB07) protein is Imidazoleglycerol-phosphate dehydratase.